The primary structure comprises 314 residues: Vacuolar membrane protein SCY_4732 (314 aa).

The tract at residues 32–61 is disordered; the sequence is KPTSSVVSETSSKSLPSLTSSAFSTSSGTT. Residues 93-113 form a helical membrane-spanning segment; it reads VYIAVGAVIGAIFISILIWWL. Residues Ser148, Ser254, and Ser274 each carry the phosphoserine modification. Positions 240–309 are disordered; it reads EERKLNLNRP…PSMFLDDVLN (70 aa). Over residues 254–269 the composition is skewed to basic and acidic residues; the sequence is SPERKEKKINSMEGYH.

The protein belongs to the PRM5 family.

Its subcellular location is the vacuole membrane. This is Vacuolar membrane protein SCY_4732 from Saccharomyces cerevisiae (strain YJM789) (Baker's yeast).